The primary structure comprises 339 residues: Phenylalanine--tRNA ligase alpha subunit (339 aa).

Residue glutamate 247 coordinates Mg(2+).

This sequence belongs to the class-II aminoacyl-tRNA synthetase family. Phe-tRNA synthetase alpha subunit type 1 subfamily. Tetramer of two alpha and two beta subunits. Requires Mg(2+) as cofactor.

It is found in the cytoplasm. It catalyses the reaction tRNA(Phe) + L-phenylalanine + ATP = L-phenylalanyl-tRNA(Phe) + AMP + diphosphate + H(+). The chain is Phenylalanine--tRNA ligase alpha subunit from Deinococcus geothermalis (strain DSM 11300 / CIP 105573 / AG-3a).